Reading from the N-terminus, the 793-residue chain is Probable phosphoketolase (793 aa).

The protein belongs to the XFP family. The cofactor is thiamine diphosphate.

This chain is Probable phosphoketolase, found in Gloeobacter violaceus (strain ATCC 29082 / PCC 7421).